Reading from the N-terminus, the 654-residue chain is Smc-like protein Sph3 (654 aa).

Coiled-coil stretches lie at residues 135 to 290 and 341 to 503; these read TDAI…LQTV and IRGT…LTAA.

It belongs to the Sph1/Sph2 family.

In terms of biological role, involved in cell-shape determination. Required for the formation of rods and wild-type-like motility. This Haloferax volcanii (strain ATCC 29605 / DSM 3757 / JCM 8879 / NBRC 14742 / NCIMB 2012 / VKM B-1768 / DS2) (Halobacterium volcanii) protein is Smc-like protein Sph3.